The following is a 219-amino-acid chain: MNLSLHEARIIGCLLEKEVTTPDQYPLSLNSLTLACNQKSSRDPVMSMTESETQSAIDSLMKKRLVTDQTGFGSRVTKYKHRFCNTEFSDLQFSPAQFALICLLLLRGPQTPGELKSRSGRLHQFADLNEVENALLALAQREPSLVHQLPKEPGRRDSRFEELISDQVKGESVPISEHSRSQREAPSKRQDEMDELTLRVSQLELEVKTLKEALQDLLD.

The segment at 167 to 195 is disordered; it reads QVKGESVPISEHSRSQREAPSKRQDEMDE. Residues 177–191 show a composition bias toward basic and acidic residues; that stretch reads EHSRSQREAPSKRQD.

The protein belongs to the UPF0502 family.

The polypeptide is UPF0502 protein Swoo_2055 (Shewanella woodyi (strain ATCC 51908 / MS32)).